A 266-amino-acid polypeptide reads, in one-letter code: Undecaprenyl-diphosphatase (266 aa).

Transmembrane regions (helical) follow at residues 1 to 21, 43 to 63, 81 to 101, 107 to 127, 145 to 165, 183 to 203, 219 to 239, and 245 to 265; these read MMSW…TEFL, ASVF…VIYW, LYGI…GFLF, TLFT…FMLI, LTPK…WPGF, HLAA…ATGY, LFIT…KVFI, and ISLR…YLCI.

It belongs to the UppP family.

It localises to the cell membrane. The catalysed reaction is di-trans,octa-cis-undecaprenyl diphosphate + H2O = di-trans,octa-cis-undecaprenyl phosphate + phosphate + H(+). Catalyzes the dephosphorylation of undecaprenyl diphosphate (UPP). Confers resistance to bacitracin. The polypeptide is Undecaprenyl-diphosphatase (Lawsonia intracellularis (strain PHE/MN1-00)).